Reading from the N-terminus, the 290-residue chain is 4-hydroxy-tetrahydrodipicolinate synthase (290 aa).

A pyruvate-binding site is contributed by Thr-44. Tyr-132 serves as the catalytic Proton donor/acceptor. Lys-160 functions as the Schiff-base intermediate with substrate in the catalytic mechanism. Residue Ile-202 participates in pyruvate binding.

Belongs to the DapA family. In terms of assembly, homotetramer; dimer of dimers.

The protein resides in the cytoplasm. It catalyses the reaction L-aspartate 4-semialdehyde + pyruvate = (2S,4S)-4-hydroxy-2,3,4,5-tetrahydrodipicolinate + H2O + H(+). Its pathway is amino-acid biosynthesis; L-lysine biosynthesis via DAP pathway; (S)-tetrahydrodipicolinate from L-aspartate: step 3/4. Functionally, catalyzes the condensation of (S)-aspartate-beta-semialdehyde [(S)-ASA] and pyruvate to 4-hydroxy-tetrahydrodipicolinate (HTPA). This chain is 4-hydroxy-tetrahydrodipicolinate synthase, found in Geobacter metallireducens (strain ATCC 53774 / DSM 7210 / GS-15).